The chain runs to 201 residues: MFAYIKGVLAFFNPSQAIVDVHGVGYLLFIPCRLLGQLPQIGEPVQFYTTYVVREFSHTLYGFLSYQERDIFEILMNVTGIGPKMALSLIGHLSMSELQIAVMRQDLSTLCRVPGVGKKTAERLIVELKDKLAAIGHLDTSDHIEPLTQDPKSKSVQDAMLALINLGYNQTTAQKAIKQGMKELPEEIDLAQLITVALKHV.

The segment at 1 to 64 (MFAYIKGVLA…EFSHTLYGFL (64 aa)) is domain I. The tract at residues 65-143 (SYQERDIFEI…AIGHLDTSDH (79 aa)) is domain II. The interval 144-153 (IEPLTQDPKS) is flexible linker. A domain III region spans residues 153–201 (SKSVQDAMLALINLGYNQTTAQKAIKQGMKELPEEIDLAQLITVALKHV).

It belongs to the RuvA family. As to quaternary structure, homotetramer. Forms an RuvA(8)-RuvB(12)-Holliday junction (HJ) complex. HJ DNA is sandwiched between 2 RuvA tetramers; dsDNA enters through RuvA and exits via RuvB. An RuvB hexamer assembles on each DNA strand where it exits the tetramer. Each RuvB hexamer is contacted by two RuvA subunits (via domain III) on 2 adjacent RuvB subunits; this complex drives branch migration. In the full resolvosome a probable DNA-RuvA(4)-RuvB(12)-RuvC(2) complex forms which resolves the HJ.

It localises to the cytoplasm. In terms of biological role, the RuvA-RuvB-RuvC complex processes Holliday junction (HJ) DNA during genetic recombination and DNA repair, while the RuvA-RuvB complex plays an important role in the rescue of blocked DNA replication forks via replication fork reversal (RFR). RuvA specifically binds to HJ cruciform DNA, conferring on it an open structure. The RuvB hexamer acts as an ATP-dependent pump, pulling dsDNA into and through the RuvAB complex. HJ branch migration allows RuvC to scan DNA until it finds its consensus sequence, where it cleaves and resolves the cruciform DNA. This Protochlamydia amoebophila (strain UWE25) protein is Holliday junction branch migration complex subunit RuvA.